Here is a 215-residue protein sequence, read N- to C-terminus: Peroxiredoxin 1 (215 aa).

Residues 1 to 157 (MKLYQKFPET…LLRITKAALV (157 aa)) form the Thioredoxin domain. Residue Cys45 is the Cysteine sulfenic acid (-SOH) intermediate of the active site. Residue Arg120 participates in substrate binding.

The protein belongs to the peroxiredoxin family. Prx6 subfamily. As to quaternary structure, homodecamer. Pentamer of dimers that assemble into a ring structure.

Its subcellular location is the cytoplasm. The enzyme catalyses a hydroperoxide + [thioredoxin]-dithiol = an alcohol + [thioredoxin]-disulfide + H2O. Functionally, thiol-specific peroxidase that catalyzes the reduction of hydrogen peroxide and organic hydroperoxides to water and alcohols, respectively. Plays a role in cell protection against oxidative stress by detoxifying peroxides. The protein is Peroxiredoxin 1 of Sulfuracidifex metallicus (Sulfolobus metallicus).